The sequence spans 495 residues: Angiopoietin-2 (495 aa).

Residues 1-18 (MWQIVFFTLSCDLVRAAA) form the signal peptide. N-linked (GlcNAc...) asparagine glycosylation is found at Asn88, Asn118, Asn132, Asn150, Asn239, and Asn303. Residues 165-247 (STNKLEKQIL…VNNSVLQKQQ (83 aa)) are a coiled coil. Residues 274–494 (KEEQIIYRDC…GTTMMIRPAD (221 aa)) form the Fibrinogen C-terminal domain. A disulfide bridge links Cys283 with Cys312. Ca(2+)-binding residues include Asp428, Asp430, Cys432, and Cys434. 2 cysteine pairs are disulfide-bonded: Cys432–Cys434 and Cys436–Cys449.

Interacts with TEK/TIE2, competing for the same binding site as ANGPT1. Interacts with ITGA5. Interacts with SVEP1/polydom. Interacts with THBD; this interaction significantly inhibits the generation of activated PC and TAFIa/CPB2 by the thrombin/thrombomodulin complex.

The protein resides in the secreted. Binds to TEK/TIE2, competing for the ANGPT1 binding site, and modulating ANGPT1 signaling. Can induce tyrosine phosphorylation of TEK/TIE2 in the absence of ANGPT1. In the absence of angiogenic inducers, such as VEGF, ANGPT2-mediated loosening of cell-matrix contacts may induce endothelial cell apoptosis with consequent vascular regression. In concert with VEGF, it may facilitate endothelial cell migration and proliferation, thus serving as a permissive angiogenic signal. Involved in the regulation of lymphangiogenesis. This Canis lupus familiaris (Dog) protein is Angiopoietin-2 (ANGPT2).